The chain runs to 252 residues: Uridylate kinase (252 aa).

Residue Lys23–Gly26 coordinates ATP. Gly65 is a UMP binding site. ATP contacts are provided by Gly66 and Arg70. UMP-binding positions include Asp85 and Leu146–Thr153. The ATP site is built by Thr173, Gln174, Tyr179, and Asp182.

The protein belongs to the UMP kinase family. Homohexamer.

The protein localises to the cytoplasm. It carries out the reaction UMP + ATP = UDP + ADP. It participates in pyrimidine metabolism; CTP biosynthesis via de novo pathway; UDP from UMP (UMPK route): step 1/1. With respect to regulation, inhibited by UTP. Its function is as follows. Catalyzes the reversible phosphorylation of UMP to UDP. In Thermobifida fusca (strain YX), this protein is Uridylate kinase.